The chain runs to 242 residues: Triosephosphate isomerase (242 aa).

Substrate is bound at residue 8–10 (NWK). The Electrophile role is filled by histidine 91. Glutamate 155 serves as the catalytic Proton acceptor. Positions 161 and 192 each coordinate substrate.

It belongs to the triosephosphate isomerase family. As to quaternary structure, homodimer.

It is found in the cytoplasm. It carries out the reaction D-glyceraldehyde 3-phosphate = dihydroxyacetone phosphate. It functions in the pathway carbohydrate biosynthesis; gluconeogenesis. Its pathway is carbohydrate degradation; glycolysis; D-glyceraldehyde 3-phosphate from glycerone phosphate: step 1/1. Functionally, involved in the gluconeogenesis. Catalyzes stereospecifically the conversion of dihydroxyacetone phosphate (DHAP) to D-glyceraldehyde-3-phosphate (G3P). This chain is Triosephosphate isomerase, found in Wolbachia pipientis wMel.